The sequence spans 515 residues: Na(+)/H(+) antiporter NhaB (515 aa).

The next 13 membrane-spanning stretches (helical) occupy residues 23-43 (IIVFLILNPILYFLISPFIAG), 44-64 (WCLVIEFIFTLAMALKCYPLQ), 88-108 (IMASFEVILLLMFMVAGIYFM), 119-139 (LLITVRSKIVLSLSFCLSAAF), 143-163 (FLDALTVVAVIISVVMGFYGV), 202-222 (LMMHAGVGTALGGVMTLVGEP), 238-258 (FFIRMAPVTVPVLICGLITCV), 303-323 (GIIGIWLVCGLAFHLAAVGLI), 324-344 (GLSVIVLTTAFCGITSESTIG), 357-377 (LVVFFSVVAVIIDQHLFGPII), 389-409 (LLLFYGFNGLLSAISDNVFVA), 447-467 (ATPNGQAAFLFLLTSSLAPLI), and 477-497 (MALPYTIVLTVVGLLAVEYIL).

The protein belongs to the NhaB Na(+)/H(+) (TC 2.A.34) antiporter family.

Its subcellular location is the cell inner membrane. The enzyme catalyses 2 Na(+)(in) + 3 H(+)(out) = 2 Na(+)(out) + 3 H(+)(in). In terms of biological role, na(+)/H(+) antiporter that extrudes sodium in exchange for external protons. The chain is Na(+)/H(+) antiporter NhaB from Mannheimia succiniciproducens (strain KCTC 0769BP / MBEL55E).